Here is a 100-residue protein sequence, read N- to C-terminus: MTKLFDSRLADVIRKPVITEKATNALDLNQYTFEVDHRAAKPEIKAAIEALFSVKVIGVNTMNPPRRTRRVGKFSGKRSQVKKAIVRLAEGDKIQLFPES.

The protein belongs to the universal ribosomal protein uL23 family. Part of the 50S ribosomal subunit. Contacts protein L29, and trigger factor when it is bound to the ribosome.

One of the early assembly proteins it binds 23S rRNA. One of the proteins that surrounds the polypeptide exit tunnel on the outside of the ribosome. Forms the main docking site for trigger factor binding to the ribosome. The polypeptide is Large ribosomal subunit protein uL23 (Prochlorococcus marinus (strain MIT 9215)).